A 130-amino-acid chain; its full sequence is Metastasis-suppressor KiSS-1 (130 aa).

The first 19 residues, 1–19 (MISMASWQLLLLLCVATYG), serve as a signal peptide directing secretion. The interval 49–82 (KESRYAESKPGSAGLRARRSSPCPPVEGPAGRQR) is disordered. An intrachain disulfide couples cysteine 71 to cysteine 85. Position 110 is a phosphotyrosine (tyrosine 110). The interval 110–119 (YNWNSFGLRY) is essential for receptor binding and receptor activation. The residue at position 119 (tyrosine 119) is a Tyrosine amide.

The protein belongs to the KISS1 family. Weak in all tissue types with highest levels in lung and 15- 17-day embryos. Expressed in areas of the hypothalamus implicated in the neuroendocrine regulation of gonadotropin secretion, including the anteroventral periventricular nucleus, the periventricular nucleus, and the arcuate nucleus.

It is found in the secreted. Functionally, metastasis suppressor protein. May regulate events downstream of cell-matrix adhesion, perhaps involving cytoskeletal reorganization. Generates a C-terminally amidated peptide, metastin which functions as the endogenous ligand of the G-protein coupled receptor GPR54. Activation of the receptor inhibits cell proliferation and cell migration, key characteristics of tumor metastasis. The receptor is also essential for normal gonadotropin-released hormone physiology and for puberty. The hypothalamic KiSS1/GPR54 system is a pivotal factor in central regulation of the gonadotropic axis at puberty and in adulthood. Intracerebroventricular administration induces an increase in serum LH and FSH levels in prepubertal male and female as well as in adult animals. This Mus musculus (Mouse) protein is Metastasis-suppressor KiSS-1 (Kiss1).